The primary structure comprises 162 residues: NAD(P)H-quinone oxidoreductase subunit N (162 aa).

The protein belongs to the complex I NdhN subunit family. As to quaternary structure, NDH-1 can be composed of about 15 different subunits; different subcomplexes with different compositions have been identified which probably have different functions.

It is found in the cellular thylakoid membrane. The catalysed reaction is a plastoquinone + NADH + (n+1) H(+)(in) = a plastoquinol + NAD(+) + n H(+)(out). It carries out the reaction a plastoquinone + NADPH + (n+1) H(+)(in) = a plastoquinol + NADP(+) + n H(+)(out). Functionally, NDH-1 shuttles electrons from an unknown electron donor, via FMN and iron-sulfur (Fe-S) centers, to quinones in the respiratory and/or the photosynthetic chain. The immediate electron acceptor for the enzyme in this species is believed to be plastoquinone. Couples the redox reaction to proton translocation, and thus conserves the redox energy in a proton gradient. Cyanobacterial NDH-1 also plays a role in inorganic carbon-concentration. This Trichormus variabilis (strain ATCC 29413 / PCC 7937) (Anabaena variabilis) protein is NAD(P)H-quinone oxidoreductase subunit N.